Reading from the N-terminus, the 22-residue chain is Rothein 4.1 (22 aa).

The protein belongs to the frog skin active peptide (FSAP) family. Rothein subfamily. As to expression, expressed by the skin dorsal glands.

The protein localises to the secreted. Functionally, lacks antimicrobial activity. Does not inhibit the formation of NO by neuronal nitric oxide. This is Rothein 4.1 from Litoria rothii (Roth's tree frog).